A 552-amino-acid polypeptide reads, in one-letter code: Acyl-CoA-dependent acyltransferase MAC1 (552 aa).

The protein belongs to the trichothecene O-acetyltransferase family.

It functions in the pathway secondary metabolite biosynthesis. Its function is as follows. Acyl-CoA-dependent acyltransferase; part of the gene cluster that mediates the biosynthesis of mannosylerythritol lipids (MELs), surface-active substances that enhance the availability of water-insoluble substrates. Depending on the number of acetyl groups, mannosylerythritol lipids can be differentiated into MEL A (fully acetylated), MEL B and MEL C (monoacetylated at R-6 and R-4, respectively), and the fully deacetylated MEL D. The first step in the pathway is the generation of mannosylerythritol by the glycosyltransferase EMT1 which catalyzes the transfer of GDP-mannose to the C-4 atom of meso-erythritol. This reaction has to be stereospecific, since only mannosyl-D-erythritol is generated. The produced disaccharide is subsequently acylated with fatty acids of various lengths by the acyltransferases MAC1 and MAC2 at positions C-2 and C-3, repectively. The existence of MEL derivatives which carry an acetyl group at C-2 implies that at least MAC1 also accepts acetyl-CoA as a donor. The final step of MEL biosynthesis is the acetylation of the fully acylated mannosylerythritol lipids catalyzed by the acetyl-CoA-dependent acetyltransferase MAT1. MAT1 displays a relaxed regioselectivity and is able to transfer acetylgroups to both positions C-4 and C-6 of the mannosyl moiety. In Pseudozyma antarctica (strain T-34) (Yeast), this protein is Acyl-CoA-dependent acyltransferase MAC1.